The primary structure comprises 436 residues: MEKIIVRGGRKLNGTVKVEGAKNAVLPVIAASLLASEEKSVICDVPTLSDVYTINEVLRHLGASVHFENNTVTVDASRTLSTEAPFEYVRKMRASVLVMGPLLARTGHSRVALPGGCAIGSRPIDQHLKGFEAMGAKIKVGNGFIEATVEGRLQGAKIYLDFPSVGATENLIMAAALAEGTTTLENAAKEPEIVDLANYINAMGGKIRGAGTGTIKIEGVKALHGAKHTIIPDRIEAGTFMVAAAITEGNVLVKGAVPEHLTSLIAKMEEMGVQILEEGDGLRIIGPSELKPIDLKTMPHPGFPTDMQSQMMALLMRANGTSMITETVFENRFMHAEEFRRMNGDIKIEGRSVIINGPVQLQGAEVAATDLRAGAALILAGLVADGHTRVTELKHLDRGYVNFHQKLAGLGADIERVNDEEAVHIENKEVVSDLNA.

22-23 (KN) provides a ligand contact to phosphoenolpyruvate. Arg93 contributes to the UDP-N-acetyl-alpha-D-glucosamine binding site. The Proton donor role is filled by Cys117. Cys117 carries the 2-(S-cysteinyl)pyruvic acid O-phosphothioketal modification. UDP-N-acetyl-alpha-D-glucosamine contacts are provided by residues 122 to 126 (RPIDQ), Asp306, and Val328.

Belongs to the EPSP synthase family. MurA subfamily.

Its subcellular location is the cytoplasm. It carries out the reaction phosphoenolpyruvate + UDP-N-acetyl-alpha-D-glucosamine = UDP-N-acetyl-3-O-(1-carboxyvinyl)-alpha-D-glucosamine + phosphate. Its pathway is cell wall biogenesis; peptidoglycan biosynthesis. In terms of biological role, cell wall formation. Adds enolpyruvyl to UDP-N-acetylglucosamine. This chain is UDP-N-acetylglucosamine 1-carboxyvinyltransferase 1, found in Bacillus licheniformis (strain ATCC 14580 / DSM 13 / JCM 2505 / CCUG 7422 / NBRC 12200 / NCIMB 9375 / NCTC 10341 / NRRL NRS-1264 / Gibson 46).